Consider the following 255-residue polypeptide: 5'-nucleotidase SurE (255 aa).

Residues aspartate 8, aspartate 9, serine 40, and asparagine 93 each contribute to the a divalent metal cation site.

Belongs to the SurE nucleotidase family. A divalent metal cation serves as cofactor.

It is found in the cytoplasm. It catalyses the reaction a ribonucleoside 5'-phosphate + H2O = a ribonucleoside + phosphate. Functionally, nucleotidase that shows phosphatase activity on nucleoside 5'-monophosphates. The chain is 5'-nucleotidase SurE from Bradyrhizobium sp. (strain BTAi1 / ATCC BAA-1182).